Consider the following 303-residue polypeptide: N-acetyl-D-glucosamine kinase (303 aa).

ATP contacts are provided by residues 4–11 and 133–140; these read GFDVGGTK and GFGGGLIF. The Zn(2+) site is built by histidine 157, cysteine 177, cysteine 179, and cysteine 184.

Belongs to the ROK (NagC/XylR) family. NagK subfamily.

The enzyme catalyses N-acetyl-D-glucosamine + ATP = N-acetyl-D-glucosamine 6-phosphate + ADP + H(+). It functions in the pathway cell wall biogenesis; peptidoglycan recycling. Its function is as follows. Catalyzes the phosphorylation of N-acetyl-D-glucosamine (GlcNAc) derived from cell-wall degradation, yielding GlcNAc-6-P. This Aliivibrio fischeri (strain ATCC 700601 / ES114) (Vibrio fischeri) protein is N-acetyl-D-glucosamine kinase.